Here is a 475-residue protein sequence, read N- to C-terminus: MPKLQGFEFWSRTLGGARHVVAPMVDQSELAWRLLSRRHGAQLCYTPMLHAQVFVRDANYRKENLYCDVCPEDRPLIVQFCANDPEVFVQAALLAQDYCDAIDLNLGCPQMIAKRGHYGAFLQEEWDLLQRMILLAHERLSVPVTCKIRVFPEIDKTVRYAQMLEKAGCQLLTVHGRTKEQKGPMAGTASWEHIKAVRKAVGIPVFANGNIQCLQDVERCIQDTGVQGVMSAEGNLHNPALFEGRSPAVWELAEEYLDIVRQHPCPLSYVRAHLFKLWHHTLQVHQQLREELAKVKTLEGVAAVSQALKLRCQEDMSRQQEGVRPADNLPAFHWICQPYIRPGPREGSKENSGGRSKRALEEEEGSMEGLSKNKLKKQLRNPHKTFDPSLKPKYAKCDQCGNPKGNRCVFNLCRGCCKKRAFRETADCPGHGLLFKTKLEKSLAWKGTQPGLQEAQQVRPVTPSGFSEVVGSALA.

Residues 23–25 (PMV) and Gln-79 contribute to the FMN site. Cys-108 functions as the Proton donor in the catalytic mechanism. Residues Lys-147, His-175, 208 to 210 (NGN), and 232 to 233 (AE) contribute to the FMN site. The interval 343-388 (GPREGSKENSGGRSKRALEEEEGSMEGLSKNKLKKQLRNPHKTFDP) is disordered. Over residues 373–383 (NKLKKQLRNPH) the composition is skewed to basic residues.

This sequence belongs to the Dus family. Dus1 subfamily. FMN serves as cofactor.

It is found in the cytoplasm. The protein localises to the nucleus. It carries out the reaction 5,6-dihydrouridine(16) in tRNA + NADP(+) = uridine(16) in tRNA + NADPH + H(+). It catalyses the reaction 5,6-dihydrouridine(16) in tRNA + NAD(+) = uridine(16) in tRNA + NADH + H(+). The enzyme catalyses 5,6-dihydrouridine(17) in tRNA + NAD(+) = uridine(17) in tRNA + NADH + H(+). The catalysed reaction is 5,6-dihydrouridine(17) in tRNA + NADP(+) = uridine(17) in tRNA + NADPH + H(+). Its function is as follows. Catalyzes the synthesis of dihydrouridine, a modified base found in the D-loop of most tRNAs. Specifically modifies U16 and U17 in cytoplasmic tRNAs. Affects the level of some mature tRNA and thereby the total cellular translation. The polypeptide is tRNA-dihydrouridine(16/17) synthase [NAD(P)(+)]-like (Dus1l) (Mus musculus (Mouse)).